A 510-amino-acid chain; its full sequence is 2,3-bisphosphoglycerate-independent phosphoglycerate mutase (510 aa).

D13 and S63 together coordinate Mn(2+). The active-site Phosphoserine intermediate is the S63. Residues H124, 154–155 (RD), R186, R192, 262–265 (RADR), and K334 contribute to the substrate site. Residues D401, H405, D442, H443, and H461 each coordinate Mn(2+).

It belongs to the BPG-independent phosphoglycerate mutase family. Monomer. Mn(2+) is required as a cofactor.

The enzyme catalyses (2R)-2-phosphoglycerate = (2R)-3-phosphoglycerate. It functions in the pathway carbohydrate degradation; glycolysis; pyruvate from D-glyceraldehyde 3-phosphate: step 3/5. In terms of biological role, catalyzes the interconversion of 2-phosphoglycerate and 3-phosphoglycerate. In Vibrio parahaemolyticus serotype O3:K6 (strain RIMD 2210633), this protein is 2,3-bisphosphoglycerate-independent phosphoglycerate mutase.